Here is a 204-residue protein sequence, read N- to C-terminus: Thymidylate kinase (204 aa).

Position 7-14 (7-14 (GGEGVGKT)) interacts with ATP.

This sequence belongs to the thymidylate kinase family.

The catalysed reaction is dTMP + ATP = dTDP + ADP. Its function is as follows. Phosphorylation of dTMP to form dTDP in both de novo and salvage pathways of dTTP synthesis. The sequence is that of Thymidylate kinase from Synechococcus sp. (strain JA-3-3Ab) (Cyanobacteria bacterium Yellowstone A-Prime).